A 398-amino-acid polypeptide reads, in one-letter code: MHTVATSGPNASWGAPANASGCPGCGANASDGPVPSPRAVDAWLVPLFFAALMLLGLVGNSLVIYVICRHKPMRTVTNFYIANLAATDVTFLLCCVPFTALLYPLPGWVLGDFMCKFVNYIQQVSVQATCATLTAMSVDRWYVTVFPLRALHRRTPRLALAVSLSIWVGSAAVSAPVLALHRLSPGPRAYCSEAFPSRALERAFALYNLLALYLLPLLATCACYAAMLRHLGRVAVRPAPADSALQGQVLAERAGAVRAKVSRLVAAVVLLFAACWGPIQLFLVLQALGPAGSWHPRSYAAYALKTWAHCMSYSNSALNPLLYAFLGSHFRQAFRRVCPCAPRRPRRPRRPGPSDPAAPHAELLRLGSHPAPARAQKPGSSGLAARGLCVLGEDNAPL.

At 1 to 46 (MHTVATSGPNASWGAPANASGCPGCGANASDGPVPSPRAVDAWLVP) the chain is on the extracellular side. Asn10, Asn18, and Asn28 each carry an N-linked (GlcNAc...) asparagine glycan. A helical transmembrane segment spans residues 47–67 (LFFAALMLLGLVGNSLVIYVI). The Cytoplasmic portion of the chain corresponds to 68–78 (CRHKPMRTVTN). Residues 79-101 (FYIANLAATDVTFLLCCVPFTAL) form a helical membrane-spanning segment. Residues 102 to 120 (LYPLPGWVLGDFMCKFVNY) are Extracellular-facing. Cys115 and Cys191 are disulfide-bonded. A helical transmembrane segment spans residues 121–138 (IQQVSVQATCATLTAMSV). Residues 139–157 (DRWYVTVFPLRALHRRTPR) lie on the Cytoplasmic side of the membrane. A helical membrane pass occupies residues 158-178 (LALAVSLSIWVGSAAVSAPVL). Over 179-202 (ALHRLSPGPRAYCSEAFPSRALER) the chain is Extracellular. Residues 203–223 (AFALYNLLALYLLPLLATCAC) form a helical membrane-spanning segment. Residues 224-263 (YAAMLRHLGRVAVRPAPADSALQGQVLAERAGAVRAKVSR) lie on the Cytoplasmic side of the membrane. Residues 264-284 (LVAAVVLLFAACWGPIQLFLV) traverse the membrane as a helical segment. The Extracellular segment spans residues 285–305 (LQALGPAGSWHPRSYAAYALK). A helical membrane pass occupies residues 306–328 (TWAHCMSYSNSALNPLLYAFLGS). Over 329-398 (HFRQAFRRVC…CVLGEDNAPL (70 aa)) the chain is Cytoplasmic. The disordered stretch occupies residues 341–363 (APRRPRRPRRPGPSDPAAPHAEL).

Belongs to the G-protein coupled receptor 1 family. Most highly expressed in the pancreas, placenta and spinal cord, with lower-level of expression in peripheral blood leukocytes, kidney, lung, fetal liver, stomach, small intestine, testes, spleen, thymus, adrenal glands and lymph nodes. In the adult brain, expressed in the superior frontal gyrus, putamen, caudate nucleus, cingulate gyrus, nucleus accumbens, hippocampus, pons and amygdala, as well as the hypothalamus and pituitary. Expression levels are higher in early (7-9 weeks) than term placentas. Expression levels were increased in both early placentas and molar pregnancies and were reduced in choriocarcinoma cells. Expressed at higher levels in first trimester trophoblasts than at term of gestation. Also found in the extravillous trophoblast suggesting endocrine/paracrine activation mechanism.

The protein localises to the cell membrane. Its function is as follows. Receptor for metastin (kisspeptin-54 or kp-54), a C-terminally amidated peptide of KiSS1. KiSS1 is a metastasis suppressor protein that suppresses metastases in malignant melanomas and in some breast carcinomas without affecting tumorigenicity. The metastasis suppressor properties may be mediated in part by cell cycle arrest and induction of apoptosis in malignant cells. The receptor is essential for normal gonadotropin-released hormone physiology and for puberty. The hypothalamic KiSS1/KISS1R system is a pivotal factor in central regulation of the gonadotropic axis at puberty and in adulthood. The receptor is also probably involved in the regulation and fine-tuning of trophoblast invasion generated by the trophoblast itself. Analysis of the transduction pathways activated by the receptor identifies coupling to phospholipase C and intracellular calcium release through pertussis toxin-insensitive G(q) proteins. This chain is KiSS-1 receptor (KISS1R), found in Homo sapiens (Human).